The primary structure comprises 122 residues: MNMLPMFTYSGLPVTLLCLIQLRRSVMILWIVVIWVQKPFHHLTTYLSRLHMTIILTVLPNLCPLTVGLSEEGPPCLRTFRDPFLGHMQLISKDQLSIPWMIGLPKQIVKVKWKVLCDLGWT.

This is an uncharacterized protein from Saccharomyces cerevisiae (strain ATCC 204508 / S288c) (Baker's yeast).